A 141-amino-acid chain; its full sequence is Hemoglobin subunit alpha (141 aa).

Residues 1-141 (VLSGDDKSNL…VSTVLTSKYR (141 aa)) enclose the Globin domain. The residue at position 3 (Ser3) is a Phosphoserine. 2 positions are modified to N6-succinyllysine: Lys7 and Lys11. Residue Lys16 is modified to N6-acetyllysine; alternate. Lys16 is modified (N6-succinyllysine; alternate). Phosphotyrosine is present on Tyr24. Residue Lys40 is modified to N6-succinyllysine. Residue Ser49 is modified to Phosphoserine. His58 provides a ligand contact to O2. His87 lines the heme b pocket. Position 102 is a phosphoserine (Ser102). Phosphothreonine is present on Thr108. 2 positions are modified to phosphoserine: Ser124 and Ser131. A phosphothreonine mark is found at Thr134 and Thr137. Ser138 bears the Phosphoserine mark.

This sequence belongs to the globin family. Heterotetramer of two alpha chains and two beta chains. Red blood cells.

In terms of biological role, involved in oxygen transport from the lung to the various peripheral tissues. The chain is Hemoglobin subunit alpha from Microtus pennsylvanicus (Meadow vole).